The chain runs to 158 residues: Non-secretory ribonuclease (158 aa).

The first 27 residues, 1–27 (MVPKLFTSQICLLLLLGLLGVEGSLHA), serve as a signal peptide directing secretion. The active-site Proton acceptor is the histidine 42. Intrachain disulfides connect cysteine 50/cysteine 110, cysteine 64/cysteine 121, cysteine 82/cysteine 136, and cysteine 89/cysteine 98. 3'-nitrotyrosine is present on tyrosine 60. Substrate is bound at residue 65-69 (KNQNT). 3 N-linked (GlcNAc...) asparagine glycosylation sites follow: asparagine 86, asparagine 92, and asparagine 111. Histidine 153 functions as the Proton donor in the catalytic mechanism.

The protein belongs to the pancreatic ribonuclease family. As to quaternary structure, interacts with and forms a tight 1:1 complex with RNH1. Dimerization of two such complexes may occur.

It is found in the lysosome. The protein resides in the cytoplasmic granule. The catalysed reaction is an [RNA] containing cytidine + H2O = an [RNA]-3'-cytidine-3'-phosphate + a 5'-hydroxy-ribonucleotide-3'-[RNA].. The enzyme catalyses an [RNA] containing uridine + H2O = an [RNA]-3'-uridine-3'-phosphate + a 5'-hydroxy-ribonucleotide-3'-[RNA].. Its function is as follows. This is a non-secretory ribonuclease. It is a pyrimidine specific nuclease with a slight preference for U. Cytotoxin and helminthotoxin. Possesses a wide variety of biological activities. In Aotus trivirgatus (Three-striped night monkey), this protein is Non-secretory ribonuclease (RNASE2).